Reading from the N-terminus, the 361-residue chain is Cobalt-precorrin-5B C(1)-methyltransferase (361 aa).

Belongs to the CbiD family.

The enzyme catalyses Co-precorrin-5B + S-adenosyl-L-methionine = Co-precorrin-6A + S-adenosyl-L-homocysteine. Its pathway is cofactor biosynthesis; adenosylcobalamin biosynthesis; cob(II)yrinate a,c-diamide from sirohydrochlorin (anaerobic route): step 6/10. Its function is as follows. Catalyzes the methylation of C-1 in cobalt-precorrin-5B to form cobalt-precorrin-6A. This is Cobalt-precorrin-5B C(1)-methyltransferase from Methylorubrum extorquens (strain CM4 / NCIMB 13688) (Methylobacterium extorquens).